A 345-amino-acid polypeptide reads, in one-letter code: Uroporphyrinogen decarboxylase (345 aa).

Substrate-binding positions include 27–31 (RQAGR), Phe-46, Asp-76, Tyr-152, Ser-207, and His-321.

It belongs to the uroporphyrinogen decarboxylase family. As to quaternary structure, homodimer.

The protein localises to the cytoplasm. The catalysed reaction is uroporphyrinogen III + 4 H(+) = coproporphyrinogen III + 4 CO2. It participates in porphyrin-containing compound metabolism; protoporphyrin-IX biosynthesis; coproporphyrinogen-III from 5-aminolevulinate: step 4/4. Functionally, catalyzes the decarboxylation of four acetate groups of uroporphyrinogen-III to yield coproporphyrinogen-III. The chain is Uroporphyrinogen decarboxylase from Staphylococcus aureus (strain MRSA252).